A 202-amino-acid chain; its full sequence is Inner membrane-spanning protein YciB (202 aa).

Transmembrane regions (helical) follow at residues 3-23 (FFLD…AGAA), 46-66 (ILIA…IVWL), 74-94 (MLWV…VFHN), 100-120 (WKPT…ALLF), 145-165 (LAWI…AYGY), and 173-193 (FKLF…GFYL).

It belongs to the YciB family.

It localises to the cell inner membrane. Plays a role in cell envelope biogenesis, maintenance of cell envelope integrity and membrane homeostasis. In Azoarcus sp. (strain BH72), this protein is Inner membrane-spanning protein YciB.